A 264-amino-acid polypeptide reads, in one-letter code: Thymidylate synthase (264 aa).

R21 is a binding site for dUMP. H51 contributes to the (6R)-5,10-methylene-5,6,7,8-tetrahydrofolate binding site. R126–R127 contributes to the dUMP binding site. Catalysis depends on C146, which acts as the Nucleophile. Residues R166–D169, N177, and H207–Y209 contribute to the dUMP site. (6R)-5,10-methylene-5,6,7,8-tetrahydrofolate is bound at residue D169. A263 contributes to the (6R)-5,10-methylene-5,6,7,8-tetrahydrofolate binding site.

This sequence belongs to the thymidylate synthase family. Bacterial-type ThyA subfamily. As to quaternary structure, homodimer.

The protein localises to the cytoplasm. It carries out the reaction dUMP + (6R)-5,10-methylene-5,6,7,8-tetrahydrofolate = 7,8-dihydrofolate + dTMP. The protein operates within pyrimidine metabolism; dTTP biosynthesis. Catalyzes the reductive methylation of 2'-deoxyuridine-5'-monophosphate (dUMP) to 2'-deoxythymidine-5'-monophosphate (dTMP) while utilizing 5,10-methylenetetrahydrofolate (mTHF) as the methyl donor and reductant in the reaction, yielding dihydrofolate (DHF) as a by-product. This enzymatic reaction provides an intracellular de novo source of dTMP, an essential precursor for DNA biosynthesis. The polypeptide is Thymidylate synthase (Shewanella baltica (strain OS185)).